We begin with the raw amino-acid sequence, 118 residues long: Holo-[acyl-carrier-protein] synthase (118 aa).

Mg(2+)-binding residues include D8 and E58.

Belongs to the P-Pant transferase superfamily. AcpS family. It depends on Mg(2+) as a cofactor.

Its subcellular location is the cytoplasm. It carries out the reaction apo-[ACP] + CoA = holo-[ACP] + adenosine 3',5'-bisphosphate + H(+). Its function is as follows. Transfers the 4'-phosphopantetheine moiety from coenzyme A to a Ser of acyl-carrier-protein. This chain is Holo-[acyl-carrier-protein] synthase, found in Streptococcus pyogenes serotype M12 (strain MGAS2096).